The sequence spans 427 residues: Peptidase B (427 aa).

Residues Lys195 and Asp200 each contribute to the Mn(2+) site. Lys207 is a catalytic residue. Mn(2+) is bound by residues Asp218, Asp277, and Glu279. Arg281 is an active-site residue.

This sequence belongs to the peptidase M17 family. In terms of assembly, homohexamer. Mn(2+) is required as a cofactor.

It is found in the cytoplasm. It carries out the reaction Release of an N-terminal amino acid, Xaa, from a peptide or arylamide. Xaa is preferably Glu or Asp but may be other amino acids, including Leu, Met, His, Cys and Gln.. Functionally, probably plays an important role in intracellular peptide degradation. The polypeptide is Peptidase B (Escherichia coli (strain SE11)).